The chain runs to 297 residues: Formylmethanofuran--tetrahydromethanopterin formyltransferase (297 aa).

This sequence belongs to the FTR family. As to quaternary structure, homotetramer.

Its subcellular location is the cytoplasm. It carries out the reaction N-formylmethanofuran + 5,6,7,8-tetrahydromethanopterin + H(+) = N(5)-formyl-5,6,7,8-tetrahydromethanopterin + methanofuran. The protein operates within one-carbon metabolism; methanogenesis from CO(2); 5,10-methenyl-5,6,7,8-tetrahydromethanopterin from CO(2): step 2/3. Catalyzes the reversible transfer of a formyl group from formylmethanofuran (formyl-MFR) to tetrahydromethanopterin (H(4)MPT) to produce 5-formyl tetrahydromethanopterin (5-formyl-H(4)MPT) and methanofuran (MFR). The polypeptide is Formylmethanofuran--tetrahydromethanopterin formyltransferase (Methanococcoides burtonii (strain DSM 6242 / NBRC 107633 / OCM 468 / ACE-M)).